Consider the following 120-residue polypeptide: Large ribosomal subunit protein bL17 (120 aa).

Belongs to the bacterial ribosomal protein bL17 family. In terms of assembly, part of the 50S ribosomal subunit. Contacts protein L32.

The polypeptide is Large ribosomal subunit protein bL17 (Geobacillus thermodenitrificans (strain NG80-2)).